The following is a 391-amino-acid chain: Multidrug resistance protein MdtL (391 aa).

The Cytoplasmic segment spans residues 1–3; sequence MSR. A helical membrane pass occupies residues 4–24; it reads FLICSFALVLLYPAGIDMYLV. Over 25–41 the chain is Periplasmic; the sequence is GLPRIAADLNASEAQLH. The chain crosses the membrane as a helical span at residues 42–62; that stretch reads IAFSVYLAGMAAAMLFAGKVA. The Cytoplasmic segment spans residues 63-68; it reads DRSGRK. Residues 69–89 traverse the membrane as a helical segment; the sequence is PVAIPGAALFIIASVFCSLAE. Over 90-92 the chain is Periplasmic; the sequence is TST. The chain crosses the membrane as a helical span at residues 93 to 113; it reads LFLAGRFLQGLGAGCCYVVAF. The Cytoplasmic portion of the chain corresponds to 114 to 130; sequence AILRDTLDDRRRAKVLS. The helical transmembrane segment at 131-151 threads the bilayer; it reads LLNGITCIIPVLAPVLGHLIM. At 152 to 157 the chain is on the periplasmic side; sequence LKFPWQ. Residues 158 to 178 form a helical membrane-spanning segment; it reads SLFWTMAIMGIAVLMLSLFIL. At 179–198 the chain is on the cytoplasmic side; the sequence is KETRPAAPAASDKSRENSES. Residues 199–221 form a helical membrane-spanning segment; the sequence is LLNRFFLSRVVITTLSVSVILTF. The Periplasmic portion of the chain corresponds to 222–244; the sequence is VNTSPVLLMEIMGFERGEYATIM. A helical transmembrane segment spans residues 245-265; it reads ALTAGVSMTVSFSTPFALGIF. Over 266–268 the chain is Cytoplasmic; it reads KPR. The chain crosses the membrane as a helical span at residues 269–289; the sequence is TLMITSQVLFLAAGITLAVSP. At 290-292 the chain is on the periplasmic side; sequence SHA. Residues 293-313 traverse the membrane as a helical segment; that stretch reads ISLFGITLICAGFSVGFGVAM. The Cytoplasmic portion of the chain corresponds to 314–330; the sequence is SQALGPFSLRAGVASST. The chain crosses the membrane as a helical span at residues 331–351; it reads LGIAQVCGSSLWIWLAAVVGI. The Periplasmic portion of the chain corresponds to 352-355; the sequence is GAWN. Residues 356–376 traverse the membrane as a helical segment; it reads MLIGILIACSIVSLLLIMFVA. Topologically, residues 377–391 are cytoplasmic; sequence PGRPVAAHEEIHHHA.

It belongs to the major facilitator superfamily. DHA1 family. MdtL (TC 2.A.1.2.22) subfamily.

It is found in the cell inner membrane. This chain is Multidrug resistance protein MdtL, found in Shigella dysenteriae serotype 1 (strain Sd197).